A 428-amino-acid polypeptide reads, in one-letter code: MAGAASALFLLDIKGRVLVWRDYRGDVSAAQAERFFTKLIEKEGDSQSNDPVAYDNGVTYMFVQHSNVYLMIASRQNCNAASLLFFLHRVVDVFKHYFEELEEESLRDNFVVVYELLDEMMDFGYPQYTEARILSEFIKTDAYRMEVTQRPPMAVTNAVSWRSEGIQYKKNEVFLDVIENVNILVNSNGQIVRSDVVGALKMRTYLTGMPECKLGLNDRVLLEAQGRATKGKAIDLEDIKFHQCVRLARFENDRTISFIPPDGAFDLMTYRLSTQVKPLIWVEAQIESHSRSRVEMLIKARSQFKERSTATNVEIELPVPTDASNPTVRTSLGSASYAPEKDALVWKIKSFPGNKEYMLRAEFHLPSITAEEATPERKAPIRVKFEIPYFTVSGIQVRYLKIIEKSGYQALPWVRYITMAGEYELRLV.

One can recognise an MHD domain in the interval 170–426; sequence KNEVFLDVIE…ITMAGEYELR (257 aa).

This sequence belongs to the adaptor complexes medium subunit family. In terms of assembly, adaptor protein complex 1 (AP-1) is a heterotetramer composed of two large adaptins (gamma-type subunit and beta-type subunit), a medium adaptin (mu-type subunit) and a small adaptin (sigma-type subunit). Ubiquitous.

It is found in the golgi apparatus. It localises to the trans-Golgi network membrane. Its subcellular location is the early endosome membrane. The protein resides in the cytoplasmic vesicle. The protein localises to the clathrin-coated vesicle membrane. Its function is as follows. Subunit of clathrin-associated adaptor protein complex 1 that plays a role in protein sorting at the trans-Golgi network and early endosomes (TGN/EE). The AP complexes mediate the recruitment of clathrin to membranes and the recognition of sorting signals within the cytosolic tails of transmembrane cargo molecules. Required for KNOLLE localization at the cell plate to mediate cytokinesis. Functions redundantly with AP1M1 in multiple post-Golgi trafficking pathways leading from the TGN to the vacuole, the plasma membrane, and the cell-division plane. The sequence is that of AP-1 complex subunit mu-2 (AP1M2) from Arabidopsis thaliana (Mouse-ear cress).